The sequence spans 99 residues: Transmembrane protein 14A (99 aa).

Transmembrane regions (helical) follow at residues Met1–Lys21, Gly24–Tyr44, and Pro79–Leu99.

The protein belongs to the TMEM14 family.

It is found in the mitochondrion membrane. The protein localises to the endoplasmic reticulum membrane. Its function is as follows. Inhibits apoptosis via negative regulation of the mitochondrial outer membrane permeabilization involved in apoptotic signaling pathway. This Bos taurus (Bovine) protein is Transmembrane protein 14A (TMEM14A).